Reading from the N-terminus, the 255-residue chain is Small ribosomal subunit protein uS2 (255 aa).

A disordered region spans residues 231–255 (RLQTGAEEEFSTEGEEVVEETPAEA). Positions 236-255 (AEEEFSTEGEEVVEETPAEA) are enriched in acidic residues.

This sequence belongs to the universal ribosomal protein uS2 family.

The protein is Small ribosomal subunit protein uS2 of Citrifermentans bemidjiense (strain ATCC BAA-1014 / DSM 16622 / JCM 12645 / Bem) (Geobacter bemidjiensis).